The chain runs to 184 residues: Tumor necrosis factor alpha-induced protein 8-like protein 2 (184 aa).

The residue at position 3 (serine 3) is a Phosphoserine; by MAP3K7.

The protein belongs to the TNFAIP8 family. TNFAIP8L2 subfamily. In terms of assembly, may interact with CASP8; however, such result is unclear since PubMed:19079267 could not reproduce the interaction with CASP8. Interacts with RAC1. In terms of processing, phosphorylated by TAK1/MAP3K7; this phosphorylation triggers association with BTRC and subsequent ubiquitination and degradation. Post-translationally, ubiquitinated in a BTRC-depdent manner; leading to degradation mediated through the proteasome pathway. In terms of tissue distribution, expressed in T-cells, B-cells, macrophages, neurons in the brain and brainstem, and stratified squamous epithelia of the esophagus, cervix and skin.

It is found in the cytoplasm. The protein localises to the nucleus. Its subcellular location is the lysosome. Its function is as follows. Acts as a negative regulator of innate and adaptive immunity by maintaining immune homeostasis. Plays a regulatory role in the Toll-like signaling pathway by determining the strength of LPS-induced signaling and gene expression. Inhibits TCR-mediated T-cell activation and negatively regulate T-cell function to prevent hyperresponsiveness. Also inhibits autolysosome formation via negatively modulating MTOR activation by interacting with RAC1 and promoting the disassociation of the RAC1-MTOR complex. Plays an essential role in NK-cell biology by acting as a checkpoint and displaying an expression pattern correlating with NK-cell maturation process and by negatively regulating NK-cell maturation and antitumor immunity. Mechanistically, suppresses IL-15-triggered mTOR activity in NK-cells. The polypeptide is Tumor necrosis factor alpha-induced protein 8-like protein 2 (TNFAIP8L2) (Homo sapiens (Human)).